Consider the following 140-residue polypeptide: Histone H2B (140 aa).

Over residues 1 to 10 the composition is skewed to basic and acidic residues; that stretch reads MPPKAAEKKP. Residues 1–48 form a disordered region; that stretch reads MPPKAAEKKPSTGGKAPAGKAPAEKKEAGKKTAAAASGDKKKRGKTRK. N6-acetyllysine; alternate occurs at positions 8 and 9. Residues lysine 8 and lysine 9 each participate in a glycyl lysine isopeptide (Lys-Gly) (interchain with G-Cter in SUMO); alternate cross-link. A compositionally biased stretch (low complexity) spans 11–21; the sequence is STGGKAPAGKA. Lysine 15 is modified (N6-acetyllysine). The residue at position 25 (lysine 25) is an N6-acetyllysine; alternate. Lysine 25 participates in a covalent cross-link: Glycyl lysine isopeptide (Lys-Gly) (interchain with G-Cter in SUMO); alternate. Lysine 26 is covalently cross-linked (Glycyl lysine isopeptide (Lys-Gly) (interchain with G-Cter in SUMO)). Residue lysine 134 forms a Glycyl lysine isopeptide (Lys-Gly) (interchain with G-Cter in ubiquitin) linkage.

This sequence belongs to the histone H2B family. As to quaternary structure, the nucleosome is a histone octamer containing two molecules each of H2A, H2B, H3 and H4 assembled in one H3-H4 heterotetramer and two H2A-H2B heterodimers. The octamer wraps approximately 147 bp of DNA. Monoubiquitinated by the ubc2-bre1 complex to form H2BK123ub1. H2BK123ub1 gives a specific tag for epigenetic transcriptional activation and is also prerequisite for H3K4me and H3K79me formation. H2BK123ub1 also modulates the formation of double-strand breaks during meiosis and is a prerequisite for DNA-damage checkpoint activation. Post-translationally, acetylated by gcn5 to form H2BK11ac and H2BK16ac. H2BK16ac can also be formed by esa1. Acetylation of N-terminal lysines and particularly formation of H2BK11acK16ac has a positive effect on transcription. In terms of processing, sumoylation to form H2BK6su or H2BK7su, and probably also H2BK16su or H2BK17su, occurs preferentially near the telomeres and represses gene transcription.

Its subcellular location is the nucleus. The protein resides in the chromosome. In terms of biological role, core component of nucleosome. Nucleosomes wrap and compact DNA into chromatin, limiting DNA accessibility to the cellular machineries which require DNA as a template. Histones thereby play a central role in transcription regulation, DNA repair, DNA replication and chromosomal stability. DNA accessibility is regulated via a complex set of post-translational modifications of histones, also called histone code, and nucleosome remodeling. The polypeptide is Histone H2B (htb1) (Aspergillus clavatus (strain ATCC 1007 / CBS 513.65 / DSM 816 / NCTC 3887 / NRRL 1 / QM 1276 / 107)).